Consider the following 347-residue polypeptide: UDP-N-acetylenolpyruvoylglucosamine reductase (347 aa).

One can recognise an FAD-binding PCMH-type domain in the interval 24–195 (FDARARVAAR…VAVTFRLPKA (172 aa)). Residue R171 is part of the active site. S247 serves as the catalytic Proton donor. Residue E343 is part of the active site.

It belongs to the MurB family. The cofactor is FAD.

It is found in the cytoplasm. It catalyses the reaction UDP-N-acetyl-alpha-D-muramate + NADP(+) = UDP-N-acetyl-3-O-(1-carboxyvinyl)-alpha-D-glucosamine + NADPH + H(+). It participates in cell wall biogenesis; peptidoglycan biosynthesis. Cell wall formation. The chain is UDP-N-acetylenolpyruvoylglucosamine reductase from Burkholderia mallei (strain NCTC 10247).